The primary structure comprises 29 residues: Cytochrome b6-f complex subunit 8 (29 aa).

Residues 3–23 (ILTLGWVSLLVVFTWSIAMVV) form a helical membrane-spanning segment.

Belongs to the PetN family. In terms of assembly, the 4 large subunits of the cytochrome b6-f complex are cytochrome b6, subunit IV (17 kDa polypeptide, PetD), cytochrome f and the Rieske protein, while the 4 small subunits are PetG, PetL, PetM and PetN. The complex functions as a dimer.

The protein resides in the cellular thylakoid membrane. Component of the cytochrome b6-f complex, which mediates electron transfer between photosystem II (PSII) and photosystem I (PSI), cyclic electron flow around PSI, and state transitions. The chain is Cytochrome b6-f complex subunit 8 from Nostoc punctiforme (strain ATCC 29133 / PCC 73102).